The following is a 547-amino-acid chain: Chaperonin GroEL (547 aa).

ATP is bound by residues 30–33 (TLGP), lysine 51, 87–91 (DGTTT), glycine 415, 480–482 (NAA), and aspartate 496. The tract at residues 525 to 547 (KPDDKPAMPPMGGGMGGMGGMDF) is disordered. Positions 535 to 547 (MGGGMGGMGGMDF) are enriched in gly residues.

Belongs to the chaperonin (HSP60) family. Forms a cylinder of 14 subunits composed of two heptameric rings stacked back-to-back. Interacts with the co-chaperonin GroES.

The protein localises to the cytoplasm. It catalyses the reaction ATP + H2O + a folded polypeptide = ADP + phosphate + an unfolded polypeptide.. Functionally, together with its co-chaperonin GroES, plays an essential role in assisting protein folding. The GroEL-GroES system forms a nano-cage that allows encapsulation of the non-native substrate proteins and provides a physical environment optimized to promote and accelerate protein folding. The sequence is that of Chaperonin GroEL from Novosphingobium aromaticivorans (strain ATCC 700278 / DSM 12444 / CCUG 56034 / CIP 105152 / NBRC 16084 / F199).